We begin with the raw amino-acid sequence, 962 residues long: Vacuolar membrane protease (962 aa).

At 1–14 the chain is on the cytoplasmic side; it reads MLAQFLRSLFRFRK. The helical transmembrane segment at 15–35 threads the bilayer; the sequence is TTVSVLLVATYVVVFLLNVWD. Over 36–359 the chain is Vacuolar; it reads RIRYQYSLPE…FVTASTKDLF (324 aa). N-linked (GlcNAc...) asparagine glycosylation is present at Asn118. His153 and Asp165 together coordinate Zn(2+). Catalysis depends on Glu197, which acts as the Proton acceptor. Zn(2+) is bound by residues Glu198, Glu223, and His297. Residues 360-380 form a helical membrane-spanning segment; it reads TLNCVVLSVIPVIILVLEFVI. Residues 381–390 lie on the Cytoplasmic side of the membrane; that stretch reads QRRKTRERNP. A helical transmembrane segment spans residues 391-411; that stretch reads LLVWLRLPFSMFISYLVTATF. At 412 to 431 the chain is on the vacuolar side; it reads RSSLFRVNPLIFSRDYVSPT. The chain crosses the membrane as a helical span at residues 432–452; the sequence is IGFSFTFLILNYLVLSLLEYL. The Cytoplasmic segment spans residues 453 to 460; that stretch reads APSRDLKT. A helical membrane pass occupies residues 461–481; it reads VSFVELFFGMWIALLWATIRL. Over 482 to 489 the chain is Vacuolar; that stretch reads CTSKYTAT. A helical transmembrane segment spans residues 490 to 510; the sequence is GVYPITVLYLLMSFGAIVGLV. Topologically, residues 511–601 are cytoplasmic; that stretch reads CSAFKRKHSV…VVSALNYDWS (91 aa). The span at 531 to 554 shows a compositional bias: polar residues; that stretch reads APNTYSSIEESPQQATNTEAPNEN. A disordered region spans residues 531–563; the sequence is APNTYSSIEESPQQATNTEAPNENSPEEHDERA. Residues 602–622 form a helical membrane-spanning segment; it reads VQFLAVVPLASFFVIMCLSLI. Residues 623 to 639 lie on the Vacuolar side of the membrane; it reads LDGIYQTCQEGFQATWN. A glycan (N-linked (GlcNAc...) asparagine) is linked at Asn639. A helical transmembrane segment spans residues 640 to 660; the sequence is VSKISMLGGMLLAIPVLPFCY. Position 661 (Lys661) is a topological domain, cytoplasmic. Residues 662 to 682 form a helical membrane-spanning segment; it reads LNYFVSMVLLFAAASAGIFSF. Topologically, residues 683–962 are vacuolar; the sequence is ERAPFTESSP…LVIVNDYIEL (280 aa). N-linked (GlcNAc...) asparagine glycosylation is found at Asn812 and Asn839.

The protein belongs to the peptidase M28 family. The cofactor is Zn(2+).

It localises to the vacuole membrane. Functionally, may be involved in vacuolar sorting and osmoregulation. In Lachancea thermotolerans (strain ATCC 56472 / CBS 6340 / NRRL Y-8284) (Yeast), this protein is Vacuolar membrane protease.